Consider the following 404-residue polypeptide: NADH-quinone oxidoreductase subunit D 2 (404 aa).

This sequence belongs to the complex I 49 kDa subunit family. As to quaternary structure, NDH-1 is composed of 14 different subunits. Subunits NuoB, C, D, E, F, and G constitute the peripheral sector of the complex.

The protein localises to the cell inner membrane. It carries out the reaction a quinone + NADH + 5 H(+)(in) = a quinol + NAD(+) + 4 H(+)(out). Functionally, NDH-1 shuttles electrons from NADH, via FMN and iron-sulfur (Fe-S) centers, to quinones in the respiratory chain. The immediate electron acceptor for the enzyme in this species is believed to be ubiquinone. Couples the redox reaction to proton translocation (for every two electrons transferred, four hydrogen ions are translocated across the cytoplasmic membrane), and thus conserves the redox energy in a proton gradient. The chain is NADH-quinone oxidoreductase subunit D 2 from Sinorhizobium medicae (strain WSM419) (Ensifer medicae).